A 159-amino-acid polypeptide reads, in one-letter code: Ribosome maturation factor RimP (159 aa).

This sequence belongs to the RimP family.

The protein localises to the cytoplasm. In terms of biological role, required for maturation of 30S ribosomal subunits. This is Ribosome maturation factor RimP from Bordetella avium (strain 197N).